The primary structure comprises 313 residues: Ribosomal RNA small subunit methyltransferase H (313 aa).

Residues 33 to 35 (GGH), aspartate 53, phenylalanine 80, aspartate 102, and glutamine 109 each bind S-adenosyl-L-methionine. The segment at 291-313 (SDEEMRANPRAQSAKLRAAEKIR) is disordered.

It belongs to the methyltransferase superfamily. RsmH family.

The protein resides in the cytoplasm. It catalyses the reaction cytidine(1402) in 16S rRNA + S-adenosyl-L-methionine = N(4)-methylcytidine(1402) in 16S rRNA + S-adenosyl-L-homocysteine + H(+). Its function is as follows. Specifically methylates the N4 position of cytidine in position 1402 (C1402) of 16S rRNA. This Heliobacterium modesticaldum (strain ATCC 51547 / Ice1) protein is Ribosomal RNA small subunit methyltransferase H.